The primary structure comprises 255 residues: Leucyl/phenylalanyl-tRNA--protein transferase (255 aa).

It belongs to the L/F-transferase family.

The protein localises to the cytoplasm. It carries out the reaction N-terminal L-lysyl-[protein] + L-leucyl-tRNA(Leu) = N-terminal L-leucyl-L-lysyl-[protein] + tRNA(Leu) + H(+). It catalyses the reaction N-terminal L-arginyl-[protein] + L-leucyl-tRNA(Leu) = N-terminal L-leucyl-L-arginyl-[protein] + tRNA(Leu) + H(+). The catalysed reaction is L-phenylalanyl-tRNA(Phe) + an N-terminal L-alpha-aminoacyl-[protein] = an N-terminal L-phenylalanyl-L-alpha-aminoacyl-[protein] + tRNA(Phe). Functions in the N-end rule pathway of protein degradation where it conjugates Leu, Phe and, less efficiently, Met from aminoacyl-tRNAs to the N-termini of proteins containing an N-terminal arginine or lysine. In Burkholderia pseudomallei (strain 1106a), this protein is Leucyl/phenylalanyl-tRNA--protein transferase.